Reading from the N-terminus, the 394-residue chain is S-adenosylmethionine synthase (394 aa).

Histidine 18 contributes to the ATP binding site. Mg(2+) is bound at residue aspartate 20. Glutamate 46 lines the K(+) pocket. Positions 59 and 104 each coordinate L-methionine. The flexible loop stretch occupies residues 104-114; it reads QSPDIAQGVDA. ATP is bound by residues 174-176, 240-241, aspartate 249, 255-256, alanine 272, and lysine 276; these read DCK, KF, and RK. Aspartate 249 is an L-methionine binding site. Lysine 280 contributes to the L-methionine binding site.

It belongs to the AdoMet synthase family. Homotetramer; dimer of dimers. It depends on Mg(2+) as a cofactor. The cofactor is K(+).

Its subcellular location is the cytoplasm. It carries out the reaction L-methionine + ATP + H2O = S-adenosyl-L-methionine + phosphate + diphosphate. It participates in amino-acid biosynthesis; S-adenosyl-L-methionine biosynthesis; S-adenosyl-L-methionine from L-methionine: step 1/1. Its function is as follows. Catalyzes the formation of S-adenosylmethionine (AdoMet) from methionine and ATP. The overall synthetic reaction is composed of two sequential steps, AdoMet formation and the subsequent tripolyphosphate hydrolysis which occurs prior to release of AdoMet from the enzyme. The protein is S-adenosylmethionine synthase of Akkermansia muciniphila (strain ATCC BAA-835 / DSM 22959 / JCM 33894 / BCRC 81048 / CCUG 64013 / CIP 107961 / Muc).